A 91-amino-acid polypeptide reads, in one-letter code: MFATSILRSAYPAYKSPYGPKYQYQPHIDGITPKQLVRILPTAAAWTGVALFAVVYYASGIPRLRRDVLQRIPYLGERYFVNEIPASDNPF.

Residues 1–34 (MFATSILRSAYPAYKSPYGPKYQYQPHIDGITPK) lie on the Mitochondrial matrix side of the membrane. Residues 35–58 (QLVRILPTAAAWTGVALFAVVYYA) form a helical membrane-spanning segment. Residues 59 to 91 (SGIPRLRRDVLQRIPYLGERYFVNEIPASDNPF) are Mitochondrial intermembrane-facing.

The protein belongs to the UQCR11/QCR10 family. As to quaternary structure, component of the ubiquinol-cytochrome c oxidoreductase (cytochrome b-c1 complex, complex III, CIII), a multisubunit enzyme composed of 10 subunits. The complex is composed of 3 respiratory subunits cytochrome b (cob), cytochrome c1 (cyt-1) and Rieske protein (fes-1), 2 core protein subunits pep and ucr-1, and 5 low-molecular weight protein subunits qcr6, qcr7, qcr8, qcr9 and probably NCU16844/qcr10. The complex exists as an obligatory dimer and forms supercomplexes (SCs) in the inner mitochondrial membrane with NADH-ubiquinone oxidoreductase (complex I, CI) and cytochrome c oxidase (complex IV, CIV), resulting in different assemblies (supercomplexes SCI(1)III(2), SCIII(2)IV(1) and SCIII(2)IV(2) as well as higher order I(x)III(y)IV(z) megacomplexes).

Its subcellular location is the mitochondrion inner membrane. Functionally, component of the ubiquinol-cytochrome c oxidoreductase, a multisubunit transmembrane complex that is part of the mitochondrial electron transport chain which drives oxidative phosphorylation. The respiratory chain contains 3 multisubunit complexes succinate dehydrogenase (complex II, CII), ubiquinol-cytochrome c oxidoreductase (cytochrome b-c1 complex, complex III, CIII) and cytochrome c oxidase (complex IV, CIV), that cooperate to transfer electrons derived from NADH and succinate to molecular oxygen, creating an electrochemical gradient over the inner membrane that drives transmembrane transport and the ATP synthase. The cytochrome b-c1 complex catalyzes electron transfer from ubiquinol to cytochrome c, linking this redox reaction to translocation of protons across the mitochondrial inner membrane, with protons being carried across the membrane as hydrogens on the quinol. In the process called Q cycle, 2 protons are consumed from the matrix, 4 protons are released into the intermembrane space and 2 electrons are passed to cytochrome c. This Neurospora crassa (strain ATCC 24698 / 74-OR23-1A / CBS 708.71 / DSM 1257 / FGSC 987) protein is Cytochrome b-c1 complex subunit 10, mitochondrial.